Here is a 69-residue protein sequence, read N- to C-terminus: Putative membrane protein insertion efficiency factor (69 aa).

Belongs to the UPF0161 family.

The protein localises to the cell membrane. Its function is as follows. Could be involved in insertion of integral membrane proteins into the membrane. The chain is Putative membrane protein insertion efficiency factor from Clostridium perfringens (strain SM101 / Type A).